A 481-amino-acid chain; its full sequence is RAC-beta serine/threonine-protein kinase (481 aa).

An N-acetylmethionine modification is found at Met-1. Residues 5 to 108 form the PH domain; that stretch reads SVIKEGWLHK…WMRAIQMVAN (104 aa). Residue Ser-34 is modified to Phosphoserine. A disulfide bridge connects residues Cys-60 and Cys-77. At Ser-126 the chain carries Phosphoserine. O-linked (GlcNAc) serine glycans are attached at residues Ser-128 and Ser-131. In terms of domain architecture, Protein kinase spans 152 to 409; sequence FDYLKLLGKG…AKEVMEHRFF (258 aa). Residues 158–166 and Lys-181 each bind ATP; that span reads LGKGTFGKV. Catalysis depends on Asp-275, which acts as the Proton acceptor. Residues Asn-280 and Asp-293 each coordinate Mn(2+). Residues Cys-297 and Cys-311 are joined by a disulfide bond. O-linked (GlcNAc) threonine glycosylation occurs at Thr-306. Phosphothreonine; by PDPK1 is present on Thr-309. O-linked (GlcNAc) threonine glycosylation is present at Thr-313. The region spanning 410 to 481 is the AGC-kinase C-terminal domain; it reads LSINWQDVVQ…QFSYSASIRE (72 aa). Phosphoserine is present on Ser-447. Thr-451 carries the post-translational modification Phosphothreonine. Phosphoserine occurs at positions 474 and 478. Residue Ser-474 is glycosylated (O-linked (GlcNAc) serine; alternate).

The protein belongs to the protein kinase superfamily. AGC Ser/Thr protein kinase family. RAC subfamily. In terms of assembly, interacts with BTBD10. Interacts with KCTD20. Interacts (via PH domain) with MTCP1, TCL1A and TCL1B; this interaction may facilitate AKT2 oligomerization and phosphorylation, hence increasing kinase activity. Interacts with PHB2; this interaction may be important for myogenic differentiation. Interacts (when phosphorylated) with CLIP3/ClipR-59; this interaction promotes AKT2 recruitment to the plasma membrane. Interacts with WDFY2/ProF (via WD repeats 1-3). In terms of processing, phosphorylation on Thr-309 and Ser-474 is required for full activity. Phosphorylation of the activation loop at Thr-309 by PDPK1/PDK1 is a prerequisite for full activation. Phosphorylated and activated by PDPK1/PDK1 in the presence of phosphatidylinositol 3,4,5-trisphosphate. Phosphorylation by mTORC2 in response to growth factors plays a key role in AKT1 activation: mTORC2 phosphorylates different sites depending on the context, such as Ser-474 or Ser-478, thereby facilitating subsequent phosphorylation of the activation loop by PDPK1/PDK1. Post-translationally, ubiquitinated; undergoes both 'Lys-48'- and 'Lys-63'-linked polyubiquitination. TRAF6 catalyzes 'Lys-63'-linked AKT2 ubiquitination; this modification may be important for AKT2 recruitment to the plasma membrane and for AKT2 activating phosphorylation. When phosphorylated, undergoes 'Lys-48'-polyubiquitination catalyzed by TTC3 in the nucleus, leading to its degradation by the proteasome. O-GlcNAcylation at Thr-306 and Thr-313 inhibits activating phosphorylation at Thr-309 via the disruption of the interaction between AKT and PDPK1/PDK1. Widely expressed. Expressed in myoblasts.

The protein localises to the cytoplasm. Its subcellular location is the nucleus. It localises to the cell membrane. The protein resides in the early endosome. It carries out the reaction L-seryl-[protein] + ATP = O-phospho-L-seryl-[protein] + ADP + H(+). It catalyses the reaction L-threonyl-[protein] + ATP = O-phospho-L-threonyl-[protein] + ADP + H(+). Its activity is regulated as follows. Phosphorylation at Thr-309 (in the kinase domain) and Ser-474 (in the C-terminal regulatory region) is required for full activation. In adipocytes and hepatocytes, the activation is induced by insulin. Aminofurazans, such as 4-[2-(4-amino-2,5-dihydro-1,2,5-oxadiazol-3-yl)-6-{[(1S)-3-amino-1-phenylpropyl]oxy}-1-ethyl-1H-imidazo[4,5-c]pyridin-4-yl]-2-methylbut-3-yn-2-ol (compound 32), are potent AKT2 inhibitors. AKT2 phosphorylation of PKP1 is induced by insulin. Its function is as follows. Serine/threonine kinase closely related to AKT1 and AKT3. All 3 enzymes, AKT1, AKT2 and AKT3, are collectively known as AKT kinase. AKT regulates many processes including metabolism, proliferation, cell survival, growth and angiogenesis, through the phosphorylation of a range of downstream substrates. Over 100 substrates have been reported so far, although for most of them, the precise AKT kinase catalyzing the reaction was not specified. AKT regulates glucose uptake by mediating insulin-induced translocation of the SLC2A4/GLUT4 glucose transporter to the cell surface. Phosphorylation of PTPN1 at 'Ser-50' negatively modulates its phosphatase activity preventing dephosphorylation of the insulin receptor and the attenuation of insulin signaling. Phosphorylation of TBC1D4 triggers the binding of this effector to inhibitory 14-3-3 proteins, which is required for insulin-stimulated glucose transport. AKT also regulates the storage of glucose in the form of glycogen by phosphorylating GSK3A at 'Ser-21' and GSK3B at 'Ser-9', resulting in inhibition of its kinase activity. Phosphorylation of GSK3 isoforms by AKT is also thought to be one mechanism by which cell proliferation is driven. AKT also regulates cell survival via the phosphorylation of MAP3K5 (apoptosis signal-related kinase). Phosphorylation of 'Ser-83' decreases MAP3K5 kinase activity stimulated by oxidative stress and thereby prevents apoptosis. AKT mediates insulin-stimulated protein synthesis by phosphorylating TSC2 at 'Ser-939' and 'Thr-1462', thereby activating mTORC1 signaling and leading to both phosphorylation of 4E-BP1 and in activation of RPS6KB1. AKT is involved in the phosphorylation of members of the FOXO factors (Forkhead family of transcription factors), leading to binding of 14-3-3 proteins and cytoplasmic localization. In particular, FOXO1 is phosphorylated at 'Thr-24', 'Ser-256' and 'Ser-319'. FOXO3 and FOXO4 are phosphorylated on equivalent sites. AKT has an important role in the regulation of NF-kappa-B-dependent gene transcription and positively regulates the activity of CREB1 (cyclic AMP (cAMP)-response element binding protein). The phosphorylation of CREB1 induces the binding of accessory proteins that are necessary for the transcription of pro-survival genes such as BCL2 and MCL1. AKT phosphorylates 'Ser-454' on ATP citrate lyase (ACLY), thereby potentially regulating ACLY activity and fatty acid synthesis. Activates the 3B isoform of cyclic nucleotide phosphodiesterase (PDE3B) via phosphorylation of 'Ser-273', resulting in reduced cyclic AMP levels and inhibition of lipolysis. Phosphorylates PIKFYVE on 'Ser-318', which results in increased PI(3)P-5 activity. The Rho GTPase-activating protein DLC1 is another substrate and its phosphorylation is implicated in the regulation cell proliferation and cell growth. AKT plays a role as key modulator of the AKT-mTOR signaling pathway controlling the tempo of the process of newborn neurons integration during adult neurogenesis, including correct neuron positioning, dendritic development and synapse formation. Signals downstream of phosphatidylinositol 3-kinase (PI(3)K) to mediate the effects of various growth factors such as platelet-derived growth factor (PDGF), epidermal growth factor (EGF), insulin and insulin-like growth factor 1 (IGF1). AKT mediates the antiapoptotic effects of IGF1. Essential for the SPATA13-mediated regulation of cell migration and adhesion assembly and disassembly. May be involved in the regulation of the placental development. In response to lysophosphatidic acid stimulation, inhibits the ciliogenesis cascade. In this context, phosphorylates WDR44, hence stabilizing its interaction with Rab11 and preventing the formation of the ciliogenic Rab11-FIP3-RAB3IP complex. Also phosphorylates RAB3IP/Rabin8, thus may affect RAB3IP guanine nucleotide exchange factor (GEF) activity toward Rab8, which is important for cilia growth. Phosphorylates PKP1, facilitating its interaction with YWHAG and translocation to the nucleus, ultimately resulting in a reduction in keratinocyte intercellular adhesion. Phosphorylation of PKP1 increases PKP1 protein stability, translocation to the cytoplasm away from desmosome plaques and PKP1-driven cap-dependent translation. Functionally, several AKT2-specific substrates have been identified, including ANKRD2, C2CD5, CLK2 and PITX2. May play a role in myoblast differentiation. In this context, may act through PITX2 phosphorylation. Unphosphorylated PITX2 associates with an ELAVL1/HuR-containing complex, which stabilizes CCND1 cyclin mRNA, ensuring cell proliferation. Phosphorylation by AKT2 impairs this association, leading to CCND1 mRNA destabilization and progression towards differentiation. Also involved in the negative regulation of myogenesis in response to stress conditions. In this context, acts by phosphorylating ANKRD2. May also be a key regulator of glucose uptake. Regulates insulin-stimulated glucose transport by the increase of glucose transporter GLUT4 translocation from intracellular stores to the plasma membrane. In this context, acts by phosphorylating C2CD5/CDP138 on 'Ser-197' in insulin-stimulated adipocytes. Through the phosphorylation of CLK2 on 'Thr-343', involved in insulin-regulated suppression of hepatic gluconeogenesis. In Homo sapiens (Human), this protein is RAC-beta serine/threonine-protein kinase.